We begin with the raw amino-acid sequence, 187 residues long: ATP synthase subunit delta, chloroplastic (187 aa).

Belongs to the ATPase delta chain family. F-type ATPases have 2 components, F(1) - the catalytic core - and F(0) - the membrane proton channel. F(1) has five subunits: alpha(3), beta(3), gamma(1), delta(1), epsilon(1). CF(0) has four main subunits: a(1), b(1), b'(1) and c(10-14). The alpha and beta chains form an alternating ring which encloses part of the gamma chain. F(1) is attached to F(0) by a central stalk formed by the gamma and epsilon chains, while a peripheral stalk is formed by the delta, b and b' chains.

It is found in the plastid. It localises to the chloroplast thylakoid membrane. In terms of biological role, f(1)F(0) ATP synthase produces ATP from ADP in the presence of a proton or sodium gradient. F-type ATPases consist of two structural domains, F(1) containing the extramembraneous catalytic core and F(0) containing the membrane proton channel, linked together by a central stalk and a peripheral stalk. During catalysis, ATP synthesis in the catalytic domain of F(1) is coupled via a rotary mechanism of the central stalk subunits to proton translocation. Its function is as follows. This protein is part of the stalk that links CF(0) to CF(1). It either transmits conformational changes from CF(0) to CF(1) or is implicated in proton conduction. The polypeptide is ATP synthase subunit delta, chloroplastic (Thalassiosira pseudonana (Marine diatom)).